Consider the following 183-residue polypeptide: ESX-1 secretion-associated protein EspH (183 aa).

Residues 1 to 16 (MVDPPGNDDDHGDLDA) show a composition bias toward acidic residues. The interval 1–32 (MVDPPGNDDDHGDLDALDFSAAHTNEASPLDA) is disordered.

This chain is ESX-1 secretion-associated protein EspH, found in Mycobacterium tuberculosis (strain ATCC 25618 / H37Rv).